The sequence spans 492 residues: Probable beta-1,4-xylosyltransferase IRX14H (492 aa).

Over 1–33 the chain is Cytoplasmic; it reads MKLSVFRLSYWNRRGSSFRSSPSLDPSFDGKSP. The chain crosses the membrane as a helical; Signal-anchor for type II membrane protein span at residues 34-54; sequence SSVFWFVIHGLCCLISLILGF. The Lumenal portion of the chain corresponds to 55–492; the sequence is RFSHLVLFFL…FDGVKVSATS (438 aa). 3 N-linked (GlcNAc...) asparagine glycosylation sites follow: Asn99, Asn196, and Asn314. The disordered stretch occupies residues 457-492; it reads IKEAKSNSKPRVSKSKSYKEKQEPKAFDGVKVSATS. The span at 473–484 shows a compositional bias: basic and acidic residues; that stretch reads SYKEKQEPKAFD.

Belongs to the glycosyltransferase 43 family. In terms of tissue distribution, expressed in developing interfascicular fibers and xylem cells in stems and developing secondary xylem in roots.

It localises to the golgi apparatus membrane. Functionally, involved in the synthesis of the hemicellulose glucuronoxylan, a major component of secondary cell walls. Probably involved in the elongation of glucuronoxylan xylosyl backbone. This Arabidopsis thaliana (Mouse-ear cress) protein is Probable beta-1,4-xylosyltransferase IRX14H (IRX14H).